Reading from the N-terminus, the 262-residue chain is Protein CUSTOS (262 aa).

Disordered stretches follow at residues 1–79 and 126–262; these read MAAP…LQTT and FTSV…IPAN. Residues 9 to 18 show a composition bias toward low complexity; the sequence is SDSESSNSSS. The span at 51–61 shows a compositional bias: polar residues; it reads ANSQLSTSQPS. Phosphoserine is present on serine 61. Threonine 79 is subject to Phosphothreonine. Position 138 is a phosphoserine (serine 138). Position 182 is a phosphothreonine (threonine 182). Over residues 188 to 199 the composition is skewed to basic residues; the sequence is KKKRKLKKKAKK. Low complexity predominate over residues 200–209; the sequence is VASVDSAVAA. The segment covering 210 to 221 has biased composition (polar residues); that stretch reads TTPTSMATVQKQ. Threonine 211 carries the phosphothreonine modification. Positions 236-241 match the Nucleolar localization signal (NLS) motif; that stretch reads KKKKKA.

Belongs to the CUSTOS family.

Its subcellular location is the nucleus envelope. In terms of biological role, plays a role in the regulation of Wnt signaling pathway during early development. The chain is Protein CUSTOS from Homo sapiens (Human).